The primary structure comprises 166 residues: Chemoreceptor glutamine deamidase CheD (166 aa).

The protein belongs to the CheD family. Forms a complex with CheC.

The catalysed reaction is L-glutaminyl-[protein] + H2O = L-glutamyl-[protein] + NH4(+). Deamidates glutamine residues to glutamate on methyl-accepting chemotaxis receptors (MCPs). CheD-mediated MCP deamidation is required for productive communication of the conformational signals of the chemoreceptors to the CheA kinase. The sequence is that of Chemoreceptor glutamine deamidase CheD from Bacillus velezensis (strain DSM 23117 / BGSC 10A6 / LMG 26770 / FZB42) (Bacillus amyloliquefaciens subsp. plantarum).